A 325-amino-acid polypeptide reads, in one-letter code: Solute-binding protein RD1_1052 (325 aa).

Positions 1 to 26 (MRLFTKIKGLAAVTCVAALASSAAFA) are cleaved as a signal peptide. D-mannonate-binding positions include E75, 93-95 (GES), 148-151 (RGPR), R171, and N211. L-galactonate is bound by residues E75, 93–95 (GES), 148–151 (RGPR), R171, and N211.

Belongs to the bacterial solute-binding protein 7 family. The complex is comprised of an extracytoplasmic solute-binding protein and a heteromeric permease formed by two transmembrane proteins.

It localises to the periplasm. Solute-binding protein that binds L-galactonate and D-mannonate (in vitro). Probably part of a tripartite ATP-independent periplasmic (TRAP) transport system that mediates solute transport into the cytoplasm. This is Solute-binding protein RD1_1052 from Roseobacter denitrificans (strain ATCC 33942 / OCh 114) (Erythrobacter sp. (strain OCh 114)).